Consider the following 1622-residue polypeptide: Transient receptor potential cation channel subfamily M member 1 (1622 aa).

Disordered stretches follow at residues 1–25 (MGSM…GSQK), 64–95 (PPLP…KHTQ), 450–490 (LAPP…EVEE), 618–641 (LGME…EEEI), and 822–856 (SKEN…HKKQ). The Cytoplasmic segment spans residues 1-875 (MGSMRKMSSS…CEFYNAPIVK (875 aa)). Residues 8–25 (SSSFKRGSIKSSTSGSQK) show a composition bias toward low complexity. Polar residues predominate over residues 70 to 95 (APSTTGEDTKQADTQSGKWSVSKHTQ). Basic residues predominate over residues 472-483 (GRGKGKGKKKGK). Composition is skewed to basic and acidic residues over residues 823 to 832 (KENEDGKEKE) and 843 to 853 (GSRKGDEENEH). The chain crosses the membrane as a helical span at residues 876–896 (FWFYTISYLGYLLLFNYVILV). The Extracellular portion of the chain corresponds to 897-942 (RMDGWPSPQEWIVISYIVSLALEKIREILMSEPGKLSQKIKVWLQE). The chain crosses the membrane as a helical span at residues 943–963 (YWNITDLVAISMFMVGAILRL). Residues 964 to 973 (QSQPYMGYGR) lie on the Cytoplasmic side of the membrane. Residues 974–994 (VIYCVDIILWYIRVLDIFGVN) form a helical membrane-spanning segment. Residues 995–1006 (KYLGPYVMMIGK) are Extracellular-facing. A helical membrane pass occupies residues 1007–1027 (MMIDMLYFVVIMLVVLMSFGV). The Cytoplasmic portion of the chain corresponds to 1028–1099 (ARQAILHPEE…CIPGAWLTPA (72 aa)). A helical membrane pass occupies residues 1100 to 1120 (LMACYLLVANILLVNLLIAVF). N1121 is a glycosylation site (N-linked (GlcNAc...) asparagine). The Extracellular segment spans residues 1121-1150 (NNTFFEVKSISNQVWKFQRYQLIMTFHDRP). Residues 1151-1171 (VLPPPMIILSHIYIIIMRLSG) traverse the membrane as a helical segment. Residues 1172-1622 (RCRKKREGDQ…QEKRSAETEC (451 aa)) are Cytoplasmic-facing. Positions 1224-1252 (DERIRVTSERVENMSMRLEEINERENFMK) form a coiled coil. Disordered stretches follow at residues 1354–1383 (EDAK…RSRL), 1389–1408 (LSTE…EFDP), and 1567–1622 (CLRS…ETEC). Over residues 1613 to 1622 (QEKRSAETEC) the composition is skewed to basic and acidic residues.

It belongs to the transient receptor (TC 1.A.4) family. LTrpC subfamily. TRPM1 sub-subfamily. As to quaternary structure, homodimer. Interacts with TRPM3; the interaction results in the formation of a heteromultimeric cation channel complex that are functionally different from the homomeric channels. Interacts with GPR179. Associates with both guanine nucleotide-binding proteins G(o) and beta-gamma G protein dimer; implicated in directly regulating TRPM1 channel open-state. As to expression, expressed in the retina where it localizes on dendritic tips of ON bipolar cells. Specifically, it is expressed in retinal bipolar cells (BPCs) of the ON subtype. Not detected in brain, lung, liver, heart, kidney, spleen or small intestine. Also expressed at high levels in poorly metastatic variants of B16 melanoma and at much reduced levels in highly metastatic variants of B16 melanoma.

It localises to the cell membrane. Its subcellular location is the endoplasmic reticulum membrane. The protein resides in the cell projection. It is found in the axon. It carries out the reaction Ca(2+)(in) = Ca(2+)(out). It catalyses the reaction Mg(2+)(in) = Mg(2+)(out). The enzyme catalyses Mn(2+)(in) = Mn(2+)(out). The catalysed reaction is Ni(2+)(in) = Ni(2+)(out). Its activity is regulated as follows. Inhibited by extracellular zinc ions. Inhibited by intracellular Mg(2+). Activated by the neuroactive steroid pregnenolone sulfate. Negatively regulated by activation of GRM6 receptors in the ON-bipolar cells. Its function is as follows. Constitutively open nonselective divalent cation-conducting channels which mediate the influx of Ca(2+), Mg(2+), Mn(2+), Ba(2+), and Ni(2+) into the cytoplasm, leading to membrane depolarization. Impermeable to zinc ions. In addition, forms heteromultimeric ion channels with TRPM3 which are permeable for calcium and zinc ions. Plays an essential role for the depolarizing photoresponse of retinal ON bipolar cells. In the dark, tonic release of glutamate activates the G-protein coupled receptor for glutamate (GRM6), its activation induces the release of G(o) and the beta-gamma G protein dimer. Both subunits can interact and inactivate the TRPM1 channel. A light onset, induces decrease in glutamate release and deactivation of GRM6 leading to channel opening and membrane depolarization. May play a role in metastasis suppression. This Mus musculus (Mouse) protein is Transient receptor potential cation channel subfamily M member 1.